Consider the following 339-residue polypeptide: Photosystem II assembly lipoprotein Ycf48 (339 aa).

The N-terminal stretch at 1 to 22 is a signal peptide; that stretch reads MVIVKSWQKIFALLVVLLLCIG. Residue C23 is the site of N-palmitoyl cysteine attachment. Residue C23 is the site of S-diacylglycerol cysteine attachment.

Belongs to the Ycf48 family. As to quaternary structure, part of early PSII assembly complexes which includes D1 (psbA) and PsbI; not found in mature PSII. Binds to the lumenal side of PSII complexes. Interacts with YidC.

It is found in the cellular thylakoid membrane. In terms of biological role, a factor required for optimal assembly of photosystem II (PSII), acting in the early stages of PSII assembly. Also plays a role in replacement of photodamaged D1 (psbA). Assists YidC in synthesis of chlorophyll-binding proteins. The sequence is that of Photosystem II assembly lipoprotein Ycf48 from Trichormus variabilis (strain ATCC 29413 / PCC 7937) (Anabaena variabilis).